The following is a 71-amino-acid chain: uncharacterized protein (71 aa).

This is an uncharacterized protein from Homo sapiens (Human).